Here is a 254-residue protein sequence, read N- to C-terminus: Probable transcriptional regulator ycf27 (254 aa).

The Response regulatory domain maps to 16 to 129 (KVLIVDDEAS…ELEARIRAVL (114 aa)). The residue at position 65 (Asp-65) is a 4-aspartylphosphate. The H-T-H motif DNA-binding region spans 85–103 (DVPIIMLTALGDVADRITG). The ompR/PhoB-type DNA-binding region spans 144–245 (SGIINFNFLT…ARGTGYLFQR (102 aa)).

The protein localises to the plastid. It is found in the chloroplast. Functionally, probable promoter-specific protein mediating the interaction between DNA and RNA polymerase. This is Probable transcriptional regulator ycf27 (ycf27) from Guillardia theta (Cryptophyte).